A 583-amino-acid chain; its full sequence is Putative ABC transporter ATP-binding protein exp8 (583 aa).

An ABC transmembrane type-1 domain is found at 25 to 308; that stretch reads TFLALSFLLA…VTQNFSTLQT (284 aa). 5 consecutive transmembrane segments (helical) span residues 26-46, 61-81, 135-155, 159-179, and 259-279; these read FLAL…PLVA, AVTV…VQYV, MFSG…TTLY, VLDF…FLLV, and LGYA…GITV. In terms of domain architecture, ABC transporter spans 341-574; that stretch reads IRFEHVCFSY…GGTYHKMYSL (234 aa). ATP is bound at residue 374 to 381; sequence GHTGSGKS.

It belongs to the ABC transporter superfamily.

Its subcellular location is the cell membrane. The protein is Putative ABC transporter ATP-binding protein exp8 (exp8) of Streptococcus pneumoniae serotype 4 (strain ATCC BAA-334 / TIGR4).